Consider the following 200-residue polypeptide: Small ribosomal subunit protein uS4 (200 aa).

The S4 RNA-binding domain occupies 106-170; the sequence is RRLQTIVFKK…SPIANELHPI (65 aa). Residues 178 to 200 are disordered; sequence AERVKEEAEKEAAASEDGGEQDE. The segment covering 179 to 190 has biased composition (basic and acidic residues); it reads ERVKEEAEKEAA.

This sequence belongs to the universal ribosomal protein uS4 family. In terms of assembly, part of the 30S ribosomal subunit. Contacts protein S5. The interaction surface between S4 and S5 is involved in control of translational fidelity.

Functionally, one of the primary rRNA binding proteins, it binds directly to 16S rRNA where it nucleates assembly of the body of the 30S subunit. In terms of biological role, with S5 and S12 plays an important role in translational accuracy. The polypeptide is Small ribosomal subunit protein uS4 (Thermoplasma volcanium (strain ATCC 51530 / DSM 4299 / JCM 9571 / NBRC 15438 / GSS1)).